The following is a 157-amino-acid chain: Small ribosomal subunit protein uS7 (157 aa).

Belongs to the universal ribosomal protein uS7 family. Part of the 30S ribosomal subunit. Contacts proteins S9 and S11.

One of the primary rRNA binding proteins, it binds directly to 16S rRNA where it nucleates assembly of the head domain of the 30S subunit. Is located at the subunit interface close to the decoding center, probably blocks exit of the E-site tRNA. This is Small ribosomal subunit protein uS7 from Blochmanniella floridana.